We begin with the raw amino-acid sequence, 721 residues long: Teichoic acid poly(glycerol phosphate) polymerase (721 aa).

CDP-glycerol-binding positions include 443 to 447 (WHGTP), Arg511, 545 to 546 (PT), 582 to 584 (RMH), 624 to 625 (SS), and Asp629.

Belongs to the CDP-glycerol glycerophosphotransferase family.

Its subcellular location is the cell membrane. The enzyme catalyses 4-O-[(2R)-glycerylphospho]-N-acetyl-beta-D-mannosaminyl-(1-&gt;4)-N-acetyl-alpha-D-glucosaminyl di-trans,octa-cis-undecaprenyl diphosphate + n CDP-glycerol = 4-O-{[(2R)-1-glycerylphospho](n)-(2R)-1-glycerylphospho}-N-acetyl-beta-D-mannosaminyl-(1-&gt;4)-N-acetyl-alpha-D-glucosaminyl undecaprenyl diphosphate + n CMP + n H(+). Its pathway is cell wall biogenesis; poly(glycerol phosphate) teichoic acid biosynthesis. Its function is as follows. Responsible for the polymerization of the main chain of the major teichoic acid by sequential transfer of glycerol phosphate units from CDP-glycerol to the disaccharide linkage unit. Synthesizes polymers of approximately 35 glycerol phosphate units in length. The polypeptide is Teichoic acid poly(glycerol phosphate) polymerase (Staphylococcus epidermidis (strain ATCC 35984 / DSM 28319 / BCRC 17069 / CCUG 31568 / BM 3577 / RP62A)).